The primary structure comprises 241 residues: Methylthioribulose-1-phosphate dehydratase (241 aa).

Residue Cys102 participates in substrate binding. Residues His120, His122, and His199 each contribute to the Zn(2+) site.

This sequence belongs to the aldolase class II family. MtnB subfamily. It depends on Zn(2+) as a cofactor.

The protein resides in the cytoplasm. The enzyme catalyses 5-(methylsulfanyl)-D-ribulose 1-phosphate = 5-methylsulfanyl-2,3-dioxopentyl phosphate + H2O. The protein operates within amino-acid biosynthesis; L-methionine biosynthesis via salvage pathway; L-methionine from S-methyl-5-thio-alpha-D-ribose 1-phosphate: step 2/6. In terms of biological role, catalyzes the dehydration of methylthioribulose-1-phosphate (MTRu-1-P) into 2,3-diketo-5-methylthiopentyl-1-phosphate (DK-MTP-1-P). The polypeptide is Methylthioribulose-1-phosphate dehydratase (Coprinopsis cinerea (strain Okayama-7 / 130 / ATCC MYA-4618 / FGSC 9003) (Inky cap fungus)).